We begin with the raw amino-acid sequence, 124 residues long: Large ribosomal subunit protein uL18 (124 aa).

This sequence belongs to the universal ribosomal protein uL18 family. Part of the 50S ribosomal subunit; part of the 5S rRNA/L5/L18/L25 subcomplex. Contacts the 5S and 23S rRNAs.

Its function is as follows. This is one of the proteins that bind and probably mediate the attachment of the 5S RNA into the large ribosomal subunit, where it forms part of the central protuberance. The polypeptide is Large ribosomal subunit protein uL18 (Koribacter versatilis (strain Ellin345)).